The primary structure comprises 499 residues: MESRVIVDAFFRENSLVKHHIDSYDDFVENKIQGIIDEVTGVETEIKGGYKVSFGKVRVTKPINKEADGSVKEITPMEARIRNLAYSAPLYLEMIPLIGEGDEEKTLSPIEVYIGELPVMLGAKICHLSGKSEEDMINYGEDPKDPLGYFIVNGSEKAVVAQEDLIPNRILCEKVEKNNKIVDIAKVFSTRHGFRALCTVERSPDGLLNVSFPGMPSTIPLVILMRALGAESDREIMELISDEPTVVMQLVANLQEAREEHGINTTEDALEHIGKRVAPGQPKEYKLKRAETILCNYLLPHMGIESEKLGAKCKYLGRMAKNSIELYLGSRVEDDKDHYANKRLKLAGDLMEDLFRHSFNQLIKDIKYQLERQAIRNKEPSIQAAVRSDVLTERMRHAMATGNWVGGRTGVSQLLDRTSYLATVSQLRRVVSPLSRSQPHFEARDLHATQWGKICPSETPEGPNCGLVKNLAVMCKVTTDEEDEGIIQLIKEIGLSKDI.

It belongs to the RNA polymerase beta chain family. In terms of assembly, part of the RNA polymerase complex.

It is found in the cytoplasm. The enzyme catalyses RNA(n) + a ribonucleoside 5'-triphosphate = RNA(n+1) + diphosphate. DNA-dependent RNA polymerase (RNAP) catalyzes the transcription of DNA into RNA using the four ribonucleoside triphosphates as substrates. The Rpo2 subunit (Rpo2N and Rpo2C in this organism) is implicated in DNA promoter recognition and in nucleotide binding. This Methanococcus vannielii (strain ATCC 35089 / DSM 1224 / JCM 13029 / OCM 148 / SB) protein is DNA-directed RNA polymerase subunit Rpo2N.